The sequence spans 594 residues: MEEYQKKIKEKLNVVPLEPGCYLMKDRNDQVIYVGKAKRLRNRLRSYFTGAHDAKTTRLVGEIRNFEFIVTSSETESLLLELNLIKQYQPRYNILLKDDKSYPFIKITKEKHPRLLVTRTVKKNSGKYFGPYPNAYSAQETKKLLDRIYPFRKCDNMPDKLCLYYHIGQCMGPCVYDVDLEKYAQMTKEITDFLNGEDKTILHHLEDRMNKASEQLDFEQAKEYRDMIQHIHNLTKKQKIMSSDNTIRDVFGYSVSKGWMCVQVFFVRQGNMIKRDATMIPLQQTEEEEFYTFIGQFYSLNQHLLPKEVHVPKNLDKDIIQSVVDTKIVQPVRGAKKDMINLANHNAEVQLDNKFELIARDESRTIKAIEELGERMGIQTPIRIEAFDNSNIQGVDPVSAMVTFVDGKPHKKDYRKYKIKTVEGPDDYKSMREVVRRRYTRVLNEGLPLPDLIIVDGGKGHMNGVMDVLENELGLDIPVAGLQKNDKHQTSELLYGASAEIVPLKKNSQAFYLLHRIQDEVHRFAITFHRQTRQKTGLKSVLDDIDGIGTKRKTSLLRTFGSIKKMKEASFDELRQAGLPEKVAKNLQNALQNK.

Residues 17–94 (LEPGCYLMKD…IKQYQPRYNI (78 aa)) enclose the GIY-YIG domain. In terms of domain architecture, UVR spans 199–234 (KTILHHLEDRMNKASEQLDFEQAKEYRDMIQHIHNL).

Belongs to the UvrC family. As to quaternary structure, interacts with UvrB in an incision complex.

It is found in the cytoplasm. Its function is as follows. The UvrABC repair system catalyzes the recognition and processing of DNA lesions. UvrC both incises the 5' and 3' sides of the lesion. The N-terminal half is responsible for the 3' incision and the C-terminal half is responsible for the 5' incision. The protein is UvrABC system protein C of Staphylococcus epidermidis (strain ATCC 12228 / FDA PCI 1200).